Here is a 521-residue protein sequence, read N- to C-terminus: Probable cytochrome P450 12d1 proximal, mitochondrial (521 aa).

Residues 1–19 constitute a mitochondrion transit peptide; sequence MNTLSSARSVAIYVGPVRS. Cys467 is a binding site for heme.

This sequence belongs to the cytochrome P450 family. It depends on heme as a cofactor.

The protein resides in the mitochondrion membrane. This chain is Probable cytochrome P450 12d1 proximal, mitochondrial (Cyp12d1-p), found in Drosophila melanogaster (Fruit fly).